The chain runs to 372 residues: DNA replication and repair protein RecF (372 aa).

30–37 (GENGQGKT) is an ATP binding site.

This sequence belongs to the RecF family.

It localises to the cytoplasm. In terms of biological role, the RecF protein is involved in DNA metabolism; it is required for DNA replication and normal SOS inducibility. RecF binds preferentially to single-stranded, linear DNA. It also seems to bind ATP. This chain is DNA replication and repair protein RecF, found in Anaeromyxobacter sp. (strain K).